Reading from the N-terminus, the 306-residue chain is Acetylglutamate kinase (306 aa).

Substrate contacts are provided by residues 79-80 (GG), Arg101, and Asn203.

The protein belongs to the acetylglutamate kinase family. ArgB subfamily.

The protein localises to the cytoplasm. The catalysed reaction is N-acetyl-L-glutamate + ATP = N-acetyl-L-glutamyl 5-phosphate + ADP. The protein operates within amino-acid biosynthesis; L-arginine biosynthesis; N(2)-acetyl-L-ornithine from L-glutamate: step 2/4. In terms of biological role, catalyzes the ATP-dependent phosphorylation of N-acetyl-L-glutamate. The sequence is that of Acetylglutamate kinase from Polaromonas naphthalenivorans (strain CJ2).